A 1132-amino-acid polypeptide reads, in one-letter code: Phospholipid-transporting ATPase IG (1132 aa).

The Cytoplasmic segment spans residues 1–66 (MQMVPSLPPA…NFLPKNLFEQ (66 aa)). A helical transmembrane segment spans residues 67-85 (FRRIANFYFLIIFLVQVTV). Residue Asp86 is a topological domain, extracellular. A helical transmembrane segment spans residues 87-107 (TPTSPVTSGLPLFFVITVTAI). The Cytoplasmic portion of the chain corresponds to 108 to 290 (KQGYEDCLRH…SQKRSAVEKS (183 aa)). Residues 291-311 (INAFLIVYLFILLTKAAVCTT) traverse the membrane as a helical segment. Residues 312 to 346 (LKYVWQSTPYNDEPWYNQKTQKERETLKVLKMFTD) lie on the Extracellular side of the membrane. A helical membrane pass occupies residues 347-367 (FLSFMVLFNFIIPVSMYVTVE). Residues 368 to 879 (MQKFLGSFFI…YVRIAHLVQY (512 aa)) are Cytoplasmic-facing. Catalysis depends on Asp412, which acts as the 4-aspartylphosphate intermediate. The ATP site is built by Asp412, Lys413, and Thr414. Asp412 is a Mg(2+) binding site. Position 414 (Thr414) interacts with Mg(2+). At Ser445 the chain carries Phosphoserine. Glu501, Phe543, Lys566, Arg597, Thr677, Gly678, Asp679, Arg792, and Lys798 together coordinate ATP. Asp819 contributes to the Mg(2+) binding site. Positions 822 and 823 each coordinate ATP. Asp823 lines the Mg(2+) pocket. Residues 880 to 900 (FFYKNLCFILPQFLYQFFCGF) traverse the membrane as a helical segment. At 901 to 908 (SQQPLYDA) the chain is on the extracellular side. Residues 909–929 (AYLTMYNICFTSLPILAYSLL) traverse the membrane as a helical segment. Topologically, residues 930–955 (EQHINIDTLTSDPRLYMKISGNAMLQ) are cytoplasmic. Residues 956–976 (LGPFLYWTFLAAFEGTVFFFG) form a helical membrane-spanning segment. The Extracellular segment spans residues 977–995 (TYFLFQTASLEENGKVYGN). A helical membrane pass occupies residues 996–1016 (WTFGTIVFTVLVFTVTLKLAL). At 1017-1026 (DTRFWTWINH) the chain is on the cytoplasmic side. Residues 1027-1047 (FVIWGSLAFYVFFSFFWGGII) form a helical membrane-spanning segment. Topologically, residues 1048-1069 (WPFLKQQRMYFVFAQMLSSVST) are extracellular. A helical membrane pass occupies residues 1070 to 1090 (WLAIILLIFISLFPEILLIVL). Residues 1091 to 1132 (KNVRRRSARRNLSCRRASDSLSARPSVRPLLLRTFSDESNVL) are Cytoplasmic-facing. Ser1108, Ser1116, and Ser1126 each carry phosphoserine. A Di-leucine motif motif is present at residues 1116–1121 (SVRPLL).

The protein belongs to the cation transport ATPase (P-type) (TC 3.A.3) family. Type IV subfamily. As to quaternary structure, component of a P4-ATPase flippase complex which consists of a catalytic alpha subunit ATP11C and an accessory beta subunit TMEM30A. Mg(2+) is required as a cofactor. Post-translationally, proteolytically cleaved by CASP3, CASP6 and CASP7. Phosphorylated at Ser-1116 likely by PRKCA; this creates a functional di-leucine motif that is sufficient for endocytosis. As to expression, widely expressed.

Its subcellular location is the cell membrane. It localises to the endoplasmic reticulum membrane. The protein localises to the early endosome membrane. The protein resides in the recycling endosome membrane. The enzyme catalyses ATP + H2O + phospholipidSide 1 = ADP + phosphate + phospholipidSide 2.. The catalysed reaction is a 1,2-diacyl-sn-glycero-3-phospho-L-serine(out) + ATP + H2O = a 1,2-diacyl-sn-glycero-3-phospho-L-serine(in) + ADP + phosphate + H(+). It catalyses the reaction a 1,2-diacyl-sn-glycero-3-phosphoethanolamine(out) + ATP + H2O = a 1,2-diacyl-sn-glycero-3-phosphoethanolamine(in) + ADP + phosphate + H(+). The flippase activity is inactivated by caspase-mediated cleavage in apoptotic cells, allowing for PS exposure on the cell surface and engulfment of apoptotic cells by macrophages. The ATPase activity is up-regulated by aminophospholipids PS and PE and down-regulated by Increasing intracellular Ca2+ levels. In terms of biological role, catalytic component of a P4-ATPase flippase complex which catalyzes the hydrolysis of ATP coupled to the transport of aminophospholipids, phosphatidylserines (PS) and phosphatidylethanolamines (PE), from the outer to the inner leaflet of the plasma membrane. Major PS-flippase in immune cell subsets. In erythrocyte plasma membrane, it is required to maintain PS in the inner leaflet preventing its exposure on the surface. This asymmetric distribution is critical for the survival of erythrocytes in circulation since externalized PS is a phagocytic signal for erythrocyte clearance by splenic macrophages. Required for B cell differentiation past the pro-B cell stage. Seems to mediate PS flipping in pro-B cells. May be involved in the transport of cholestatic bile acids. This Homo sapiens (Human) protein is Phospholipid-transporting ATPase IG.